The chain runs to 86 residues: MNIFRLFNKQRTAPAARERLQVLLAHERSSAGSDLVTLLREEILAVIAKHVQLDHDKVQVTIDRNEYVSTLEIDVEIPLNAAVQAA.

The protein belongs to the MinE family.

In terms of biological role, prevents the cell division inhibition by proteins MinC and MinD at internal division sites while permitting inhibition at polar sites. This ensures cell division at the proper site by restricting the formation of a division septum at the midpoint of the long axis of the cell. The polypeptide is Cell division topological specificity factor (Rhizobium johnstonii (strain DSM 114642 / LMG 32736 / 3841) (Rhizobium leguminosarum bv. viciae)).